We begin with the raw amino-acid sequence, 181 residues long: CASP-like protein 5A1 (181 aa).

At 1–38 (MFASRPVVHPLEVAAPAHPVQQPAPGVLMKDLPGMPGT) the chain is on the cytoplasmic side. A helical membrane pass occupies residues 39–59 (PGGLGLRVLQLLFAAISLAVM). The Extracellular segment spans residues 60 to 77 (SSTADFASVSAFCYLITT). Residues 78-98 (TVLQCVWSLTVAIVDIYALLV) form a helical membrane-spanning segment. Over 99-115 (KRCLQNRRAVTLFSIGD) the chain is Cytoplasmic. The helical transmembrane segment at 116–136 (GITWLVSFSGACAAAGIPVLI) threads the bilayer. Residues 137-153 (DADLIMCSENPCASFQT) lie on the Extracellular side of the membrane. A helical transmembrane segment spans residues 154–174 (AVAMGFMCCFSLLPSFLLNFY). Topologically, residues 175–181 (SIASSHG) are cytoplasmic.

This sequence belongs to the Casparian strip membrane proteins (CASP) family. Homodimer and heterodimers.

The protein localises to the cell membrane. This is CASP-like protein 5A1 from Zea mays (Maize).